We begin with the raw amino-acid sequence, 117 residues long: Large ribosomal subunit protein eL30B (117 aa).

The span at 1-14 (MSAAPTTAPVAAVS) shows a compositional bias: low complexity. The segment at 1–22 (MSAAPTTAPVAAVSKKGKKSGD) is disordered.

The protein belongs to the eukaryotic ribosomal protein eL30 family. As to quaternary structure, component of the large ribosomal subunit (LSU). Mature yeast ribosomes consist of a small (40S) and a large (60S) subunit. The 40S small subunit contains 1 molecule of ribosomal RNA (18S rRNA) and at least 33 different proteins. The large 60S subunit contains 3 rRNA molecules (25S, 5.8S and 5S rRNA) and at least 46 different proteins.

The protein localises to the cytoplasm. Component of the ribosome, a large ribonucleoprotein complex responsible for the synthesis of proteins in the cell. The small ribosomal subunit (SSU) binds messenger RNAs (mRNAs) and translates the encoded message by selecting cognate aminoacyl-transfer RNA (tRNA) molecules. The large subunit (LSU) contains the ribosomal catalytic site termed the peptidyl transferase center (PTC), which catalyzes the formation of peptide bonds, thereby polymerizing the amino acids delivered by tRNAs into a polypeptide chain. The nascent polypeptides leave the ribosome through a tunnel in the LSU and interact with protein factors that function in enzymatic processing, targeting, and the membrane insertion of nascent chains at the exit of the ribosomal tunnel. In Schizosaccharomyces pombe (strain 972 / ATCC 24843) (Fission yeast), this protein is Large ribosomal subunit protein eL30B (rpl3002).